Reading from the N-terminus, the 667-residue chain is tRNA uridine 5-carboxymethylaminomethyl modification enzyme MnmG (667 aa).

13–18 (GGGHAG) is an FAD binding site. 280 to 294 (GPRYCPSVEDKINRF) is a binding site for NAD(+).

Belongs to the MnmG family. Homodimer. Heterotetramer of two MnmE and two MnmG subunits. Requires FAD as cofactor.

It localises to the cytoplasm. NAD-binding protein involved in the addition of a carboxymethylaminomethyl (cmnm) group at the wobble position (U34) of certain tRNAs, forming tRNA-cmnm(5)s(2)U34. The chain is tRNA uridine 5-carboxymethylaminomethyl modification enzyme MnmG from Polaromonas naphthalenivorans (strain CJ2).